Here is a 202-residue protein sequence, read N- to C-terminus: Protein DEHYDRATION-INDUCED 19 homolog 5 (202 aa).

Residues 88–97 are compositionally biased toward basic residues; the sequence is SHLLKRRKPS. The interval 88-120 is disordered; it reads SHLLKRRKPSRPSSSWPTPSNNSDPYFEGPPQY. Low complexity predominate over residues 98-112; sequence RPSSSWPTPSNNSDP.

Belongs to the Di19 family.

The chain is Protein DEHYDRATION-INDUCED 19 homolog 5 (DI19-5) from Oryza sativa subsp. japonica (Rice).